A 370-amino-acid polypeptide reads, in one-letter code: Nociceptin receptor (370 aa).

Over M1–L48 the chain is Extracellular. N21, N28, and N39 each carry an N-linked (GlcNAc...) asparagine glycan. Residues G49–Y74 form a helical membrane-spanning segment. Topologically, residues V75 to N87 are cytoplasmic. Residues I88 to T109 form a helical membrane-spanning segment. At D110 to K124 the chain is on the extracellular side. A disulfide bridge links C123 with C200. The chain crosses the membrane as a helical span at residues A125–V146. The Cytoplasmic segment spans residues D147–S165. The chain crosses the membrane as a helical span at residues K166–M188. Over G189 to W211 the chain is Extracellular. A helical membrane pass occupies residues G212–S236. Residues L237–L264 lie on the Cytoplasmic side of the membrane. Residues V265–V285 form a helical membrane-spanning segment. The Extracellular portion of the chain corresponds to Q286–V300. A helical membrane pass occupies residues L301–L322. Residues D323 to A370 lie on the Cytoplasmic side of the membrane. Residue C334 is the site of S-palmitoyl cysteine attachment.

Belongs to the G-protein coupled receptor 1 family. In terms of processing, phosphorylation at Ser-363 requires GRK3. As to expression, detected in brain cortex, stomach, ileum, jejunum and colon.

The protein localises to the cell membrane. It is found in the cytoplasmic vesicle. Its function is as follows. G-protein coupled opioid receptor that functions as a receptor for the endogenous neuropeptide nociceptin. Ligand binding causes a conformation change that triggers signaling via guanine nucleotide-binding proteins (G proteins) and modulates the activity of down-stream effectors. Signaling via G proteins mediates inhibition of adenylate cyclase activity and calcium channel activity. Arrestins modulate signaling via G proteins and mediate the activation of alternative signaling pathways that lead to the activation of MAP kinases. Plays a role in modulating nociception and the perception of pain. Plays a role in the regulation of locomotor activity by the neuropeptide nociceptin. In Sus scrofa (Pig), this protein is Nociceptin receptor (OPRL1).